Consider the following 202-residue polypeptide: Small ribosomal subunit protein uS4 (202 aa).

The tract at residues 15-42 (LGDLPGLTRKAAKRSYPPGQHGQARRKR) is disordered. The S4 RNA-binding domain occupies 90–152 (NRLDNVCFRL…KCSKQLAEGN (63 aa)).

It belongs to the universal ribosomal protein uS4 family. In terms of assembly, part of the 30S ribosomal subunit. Contacts protein S5. The interaction surface between S4 and S5 is involved in control of translational fidelity.

Its function is as follows. One of the primary rRNA binding proteins, it binds directly to 16S rRNA where it nucleates assembly of the body of the 30S subunit. In terms of biological role, with S5 and S12 plays an important role in translational accuracy. The sequence is that of Small ribosomal subunit protein uS4 from Synechococcus sp. (strain WH7803).